The chain runs to 661 residues: DNA ligase (661 aa).

Residues 31–35 (DKEYD), 79–80 (SL), and Glu-112 each bind NAD(+). Lys-114 acts as the N6-AMP-lysine intermediate in catalysis. Arg-135, Glu-169, Lys-281, and Lys-305 together coordinate NAD(+). Residues Cys-398, Cys-401, Cys-414, and Cys-420 each coordinate Zn(2+). The region spanning 578–661 (QQENIFLGKT…ISEAEFEAML (84 aa)) is the BRCT domain.

The protein belongs to the NAD-dependent DNA ligase family. LigA subfamily. The cofactor is Mg(2+). Requires Mn(2+) as cofactor.

It carries out the reaction NAD(+) + (deoxyribonucleotide)n-3'-hydroxyl + 5'-phospho-(deoxyribonucleotide)m = (deoxyribonucleotide)n+m + AMP + beta-nicotinamide D-nucleotide.. Its function is as follows. DNA ligase that catalyzes the formation of phosphodiester linkages between 5'-phosphoryl and 3'-hydroxyl groups in double-stranded DNA using NAD as a coenzyme and as the energy source for the reaction. It is essential for DNA replication and repair of damaged DNA. This Alkaliphilus oremlandii (strain OhILAs) (Clostridium oremlandii (strain OhILAs)) protein is DNA ligase.